Consider the following 628-residue polypeptide: Phosphomethylpyrimidine synthase (628 aa).

Substrate-binding positions include asparagine 225, methionine 254, tyrosine 283, histidine 319, 339–341 (SRG), 380–383 (DGLR), and glutamate 419. Residue histidine 423 participates in Zn(2+) binding. Tyrosine 446 is a binding site for substrate. Residue histidine 487 participates in Zn(2+) binding. Residues cysteine 567, cysteine 570, and cysteine 575 each coordinate [4Fe-4S] cluster.

The protein belongs to the ThiC family. Homodimer. Requires [4Fe-4S] cluster as cofactor.

It catalyses the reaction 5-amino-1-(5-phospho-beta-D-ribosyl)imidazole + S-adenosyl-L-methionine = 4-amino-2-methyl-5-(phosphooxymethyl)pyrimidine + CO + 5'-deoxyadenosine + formate + L-methionine + 3 H(+). It participates in cofactor biosynthesis; thiamine diphosphate biosynthesis. Its function is as follows. Catalyzes the synthesis of the hydroxymethylpyrimidine phosphate (HMP-P) moiety of thiamine from aminoimidazole ribotide (AIR) in a radical S-adenosyl-L-methionine (SAM)-dependent reaction. In Leptothrix cholodnii (strain ATCC 51168 / LMG 8142 / SP-6) (Leptothrix discophora (strain SP-6)), this protein is Phosphomethylpyrimidine synthase.